The following is a 295-amino-acid chain: sn-glycerol-3-phosphate transport system permease protein UgpA (295 aa).

Over 1-11 the chain is Cytoplasmic; sequence MSPSRPGFSCS. A helical transmembrane segment spans residues 12–32; the sequence is WLPYLLVLPQLAITAIFFLWP. The Periplasmic segment spans residues 33-80; it reads AGEALWYSVQTLDPFGLSSEFVGLSNFIQLFQDEYYLASFYTTLIFSA. The ABC transmembrane type-1 domain occupies 72 to 284; sequence FYTTLIFSAL…LLVIGLTVIQ (213 aa). The chain crosses the membrane as a helical span at residues 81-101; the sequence is LVAGIGLIVSLFLAAMVNYVL. At 102–109 the chain is on the cytoplasmic side; that stretch reads RGSRLYQT. Residues 110 to 130 traverse the membrane as a helical segment; the sequence is LLILPYAVAPAVAAVLWIFLF. The Periplasmic segment spans residues 131-157; it reads DPGLGLITHALAKLGYSWNHAQNSGQA. Residues 158–178 traverse the membrane as a helical segment; sequence MFLVVLASVWKQISYNFLFFL. Over 179–207 the chain is Cytoplasmic; sequence AALQSIPKSLVEAAAIDGAGPVRRFFNLV. The helical transmembrane segment at 208–228 threads the bilayer; the sequence is LPLISPVSFFLLVVNLVYAFF. At 229–262 the chain is on the periplasmic side; sequence DTFPVIDAATGGGPVQATTTLIYKIYREGFAGLD. A helical transmembrane segment spans residues 263 to 283; that stretch reads LSSSAAQSVILMLLVIGLTVI. Residues 284 to 295 are Cytoplasmic-facing; that stretch reads QFRFVERKVRYQ.

Belongs to the binding-protein-dependent transport system permease family. UgpAE subfamily. As to quaternary structure, the complex is composed of two ATP-binding proteins (UgpC), two transmembrane proteins (UgpA and UgpE) and a solute-binding protein (UgpB).

It is found in the cell inner membrane. Functionally, part of the ABC transporter complex UgpBAEC involved in sn-glycerol-3-phosphate (G3P) import. Probably responsible for the translocation of the substrate across the membrane. The polypeptide is sn-glycerol-3-phosphate transport system permease protein UgpA (ugpA) (Yersinia pestis bv. Antiqua (strain Antiqua)).